The primary structure comprises 171 residues: Co-chaperone protein HscB (171 aa).

A J domain is found at 2 to 74; the sequence is DYFTLFGLPA…LTRAEYLLSL (73 aa).

The protein belongs to the HscB family. As to quaternary structure, interacts with HscA and stimulates its ATPase activity. Interacts with IscU.

Co-chaperone involved in the maturation of iron-sulfur cluster-containing proteins. Seems to help targeting proteins to be folded toward HscA. The polypeptide is Co-chaperone protein HscB (Salmonella typhimurium (strain LT2 / SGSC1412 / ATCC 700720)).